A 256-amino-acid polypeptide reads, in one-letter code: Homeobox protein goosecoid (256 aa).

Positions 160–219 (KRRHRTIFTDEQLEALENLFQETKYPDVGTREQLARKVHLREEKVEVWFKNRRAKWRRQK) form a DNA-binding region, homeobox. The tract at residues 213–256 (AKWRRQKRSSSEESENAEKWNKTSSKASPEKREEEGKSDLDSDS) is disordered. A compositionally biased stretch (basic and acidic residues) spans 240–256 (SPEKREEEGKSDLDSDS).

This sequence belongs to the paired homeobox family. Bicoid subfamily. As to expression, in early gastrulation, expressed in the dorsal lip. In later stages of development found in head, limbs and body wall. In the embryo, expressed in the postotic cranial neural crest cells, the frontonasal prominence, the first branchial arch and cleft, and specific regions of large joints.

It localises to the nucleus. Functionally, regulates chordin (CHRD). May play a role in spatial programing within discrete embryonic fields or lineage compartments during organogenesis. In concert with NKX3-2, plays a role in defining the structural components of the middle ear; required for the development of the entire tympanic ring. Goosecoid-expressing regions of the gastrulating mouse egg cylinder have organizer-like activity when transplanted into Xenopus embryos. Probably involved in the regulatory networks that define neural crest cell fate specification and determine mesoderm cell lineages in mammals. The polypeptide is Homeobox protein goosecoid (Gsc) (Mus musculus (Mouse)).